A 177-amino-acid polypeptide reads, in one-letter code: MPIKSRIRTIPDYPKKGIMFRDITTLLKDPVGFRLVIDQITQHYLENGINFDMIIGMEARGFIIGGALSYTLGKGFVPIRKPGKLPGETVNQEYQLEYGTDKVEMHIDALEKGTRVLLVDDLLATGGTALAGAALIEKVGGVVADMAFIVNLPDIGGQKKLEEKGYSLFSLTEFEGD.

Belongs to the purine/pyrimidine phosphoribosyltransferase family. In terms of assembly, homodimer.

It localises to the cytoplasm. The enzyme catalyses AMP + diphosphate = 5-phospho-alpha-D-ribose 1-diphosphate + adenine. It participates in purine metabolism; AMP biosynthesis via salvage pathway; AMP from adenine: step 1/1. Catalyzes a salvage reaction resulting in the formation of AMP, that is energically less costly than de novo synthesis. The polypeptide is Adenine phosphoribosyltransferase (Prosthecochloris aestuarii (strain DSM 271 / SK 413)).